The following is a 483-amino-acid chain: Bromoperoxidase-catalase (483 aa).

The tract at residues Met1 to Gly24 is disordered. Catalysis depends on residues His54 and Asn127. A heme-binding site is contributed by Tyr337.

The protein belongs to the catalase family.

The enzyme catalyses 2 H2O2 = O2 + 2 H2O. This chain is Bromoperoxidase-catalase (bca), found in Streptomyces venezuelae (strain ATCC 10712 / CBS 650.69 / DSM 40230 / JCM 4526 / NBRC 13096 / PD 04745).